The sequence spans 153 residues: MLAFNFFGATEGGLFDINATLPLMAIQVVALTYILNSLFFKPVGKVVEKREKFVSDNIIEAKNKLSEVEKLEADLLTQLQSARTEAQRIVSEAENESDKLYKEALELANNEANASKEKARLEIESQTSAARDQLSKQADDLSELIVNRLILEK.

The chain crosses the membrane as a helical span at residues 23–40; it reads LMAIQVVALTYILNSLFF.

The protein belongs to the ATPase B chain family. F-type ATPases have 2 components, F(1) - the catalytic core - and F(0) - the membrane proton channel. F(1) has five subunits: alpha(3), beta(3), gamma(1), delta(1), epsilon(1). F(0) has four main subunits: a(1), b(1), b'(1) and c(10-14). The alpha and beta chains form an alternating ring which encloses part of the gamma chain. F(1) is attached to F(0) by a central stalk formed by the gamma and epsilon chains, while a peripheral stalk is formed by the delta, b and b' chains.

Its subcellular location is the cellular thylakoid membrane. In terms of biological role, f(1)F(0) ATP synthase produces ATP from ADP in the presence of a proton or sodium gradient. F-type ATPases consist of two structural domains, F(1) containing the extramembraneous catalytic core and F(0) containing the membrane proton channel, linked together by a central stalk and a peripheral stalk. During catalysis, ATP synthesis in the catalytic domain of F(1) is coupled via a rotary mechanism of the central stalk subunits to proton translocation. Its function is as follows. Component of the F(0) channel, it forms part of the peripheral stalk, linking F(1) to F(0). The b'-subunit is a diverged and duplicated form of b found in plants and photosynthetic bacteria. The polypeptide is ATP synthase subunit b' (Prochlorococcus marinus (strain MIT 9215)).